The sequence spans 766 residues: U3 small nucleolar RNA-associated protein 14 homolog C (766 aa).

The tract at residues 14 to 42 (HQEELVDLPKNYPLSENEDEGDSDGERKH) is disordered. Ser-28, Ser-51, Ser-76, and Ser-80 each carry phosphoserine. Lys-121 is covalently cross-linked (Glycyl lysine isopeptide (Lys-Gly) (interchain with G-Cter in SUMO2)). Thr-204 carries the phosphothreonine modification. Coiled-coil stretches lie at residues 216–245 (LEEA…KEKK) and 316–346 (LEAR…EEEE). A disordered region spans residues 365–563 (MNVDGPNPWM…EQLINLQNFL (199 aa)). The segment covering 396–405 (ELAAHEVSAS) has biased composition (low complexity). Phosphoserine is present on residues Ser-403 and Ser-405. Basic and acidic residues predominate over residues 407 to 434 (AEERPVAEEEILLREFEERQSLRKRSEL). The residue at position 443 (Ser-443) is a Phosphoserine. Lys-447 participates in a covalent cross-link: Glycyl lysine isopeptide (Lys-Gly) (interchain with G-Cter in SUMO2). Ser-451 is subject to Phosphoserine. The stretch at 452–470 (QEVLSELRALSQKLKEKHQ) forms a coiled coil. A compositionally biased stretch (basic residues) spans 466 to 475 (KEKHQSRKQK). Residues 502-527 (RSERVQTLEELEELGKEDCFQNKELP) show a composition bias toward basic and acidic residues. Lys-517 is covalently cross-linked (Glycyl lysine isopeptide (Lys-Gly) (interchain with G-Cter in SUMO2)). Over residues 533-542 (GQQSERTPNN) the composition is skewed to polar residues. Residues 545–555 (DAPKEKKEKEQ) show a composition bias toward basic and acidic residues. Position 567 is a phosphoserine (Ser-567). Residue Lys-732 forms a Glycyl lysine isopeptide (Lys-Gly) (interchain with G-Cter in SUMO2) linkage. The interval 734–766 (EDVGYQSSSRSDLPVIQRNPKRITTRHNKEEKL) is disordered.

This sequence belongs to the UTP14 family. In terms of tissue distribution, expressed in testis.

It localises to the nucleus. Its subcellular location is the nucleolus. In terms of biological role, essential for spermatogenesis. May be required specifically for ribosome biogenesis and hence protein synthesis during male meiosis. This Homo sapiens (Human) protein is U3 small nucleolar RNA-associated protein 14 homolog C (UTP14C).